Here is a 453-residue protein sequence, read N- to C-terminus: Transcription factor bHLH110 (453 aa).

Disordered regions lie at residues 1–37 and 177–197; these read MDSA…YGAS and SSLP…RGNF. Low complexity-rich tracts occupy residues 8-32 and 177-192; these read QLQD…SDPS and SSLP…SSQS. In terms of domain architecture, bHLH spans 322 to 371; that stretch reads VESRSSCPPFKVRKEKLGDRIAALQQLVSPFGKTDTASVLMEAIGYIKFL. A disordered region spans residues 386–411; it reads SRNRPGKASQLVSQSQEGDEEETRDL.

In terms of assembly, homodimer.

It is found in the nucleus. The sequence is that of Transcription factor bHLH110 (BHLH110) from Arabidopsis thaliana (Mouse-ear cress).